A 444-amino-acid chain; its full sequence is C4-dicarboxylate transport protein (444 aa).

9 helical membrane passes run 18 to 40 (FYSH…GHFY), 53 to 75 (AFIK…TGIA), 90 to 112 (AMLY…ANVV), 142 to 159 (IVGF…GAFA), 163 to 180 (ILQV…LAMV), 201 to 222 (LVAI…FTIG), 232 to 254 (LAML…LGAV), 327 to 349 (LFIA…LLVA), and 364 to 386 (FITL…ALIL).

It belongs to the dicarboxylate/amino acid:cation symporter (DAACS) (TC 2.A.23) family.

The protein localises to the cell inner membrane. Functionally, responsible for the transport of dicarboxylates such as succinate, fumarate, and malate from the periplasm across the inner membrane. This transport system plays an important role in the energy supply of rhizobium-legume symbionts. This Rhizobium leguminosarum protein is C4-dicarboxylate transport protein (dctA).